Reading from the N-terminus, the 653-residue chain is tRNA 5-methylaminomethyl-2-thiouridine biosynthesis bifunctional protein MnmC (653 aa).

The interval methionine 1 to threonine 233 is tRNA (mnm(5)s(2)U34)-methyltransferase. Residues isoleucine 258–serine 653 form an FAD-dependent cmnm(5)s(2)U34 oxidoreductase region.

The protein in the N-terminal section; belongs to the methyltransferase superfamily. tRNA (mnm(5)s(2)U34)-methyltransferase family. It in the C-terminal section; belongs to the DAO family. FAD is required as a cofactor.

It localises to the cytoplasm. It catalyses the reaction 5-aminomethyl-2-thiouridine(34) in tRNA + S-adenosyl-L-methionine = 5-methylaminomethyl-2-thiouridine(34) in tRNA + S-adenosyl-L-homocysteine + H(+). Its function is as follows. Catalyzes the last two steps in the biosynthesis of 5-methylaminomethyl-2-thiouridine (mnm(5)s(2)U) at the wobble position (U34) in tRNA. Catalyzes the FAD-dependent demodification of cmnm(5)s(2)U34 to nm(5)s(2)U34, followed by the transfer of a methyl group from S-adenosyl-L-methionine to nm(5)s(2)U34, to form mnm(5)s(2)U34. This chain is tRNA 5-methylaminomethyl-2-thiouridine biosynthesis bifunctional protein MnmC, found in Methylibium petroleiphilum (strain ATCC BAA-1232 / LMG 22953 / PM1).